The following is a 387-amino-acid chain: Protein spaetzle 5 (387 aa).

The signal sequence occupies residues 1-29; that stretch reads MTKSIKRPPPFSCKQVLLTYVILAYTVAA. A propeptide spanning residues 30 to 284 is cleaved from the precursor; sequence HSSPPPCGLY…PLKKRSRTKR (255 aa). The segment at 133–197 is disordered; it reads QTPFGGNPQR…SGGHLYINQS (65 aa). 2 N-linked (GlcNAc...) asparagine glycosylation sites follow: N195 and N204. Disordered stretches follow at residues 219–256 and 269–291; these read KQRQ…QSKR and GVEA…GRST. Residues 237–247 are compositionally biased toward acidic residues; that stretch reads QTEEAEEQDNP. Positions 276–286 are enriched in basic residues; the sequence is LKKRSRTKRQS. The 94-residue stretch at 291–384 folds into the Spaetzle domain; that stretch reads TLCQTTSQFI…WFPSCCVCTI (94 aa). Intrachain disulfides connect C293/C350, C331/C380, and C340/C382.

In terms of assembly, homodimer; disulfide-linked. As to expression, detected in the fan-shaped body which is a component of the locomotion center in the central nervous system (CNS) (at protein level).

Functionally, neurotrophin which may function as a ligand for the Toll-related receptors Toll-6 and Toll-7. Binds to Toll-7 and Toll-6, and probably acts as their ligands in the promotion of motor axon targeting and neuronal survival in the central nervous system (CNS). Involved in synaptic targeting of ISNb/d motorneurons and also some SNa motorneurons. May be involved in the normal development of specific neurons at the neuromuscular junction. The protein is Protein spaetzle 5 of Drosophila melanogaster (Fruit fly).